A 759-amino-acid chain; its full sequence is Forkhead box protein M1 (759 aa).

The interval 1-92 is disordered; it reads MRTSPRRPLI…MRLPSNPPQS (92 aa). Basic and acidic residues predominate over residues 48 to 63; the sequence is LAHELEDMAPKSKADQ. Positions 260-358 form a DNA-binding region, fork-head; the sequence is RPPYSYMALI…KTASPMSPAD (99 aa). 3 disordered regions span residues 420 to 450, 516 to 535, and 596 to 631; these read AESS…KHLG, SANP…PSNV, and KEHF…RDPV. Positions 601–612 are enriched in low complexity; sequence KPTTSSTPSKPT.

Localized to the animal hemisphere of early cleavage stage embryos. During neurulation, expressed in the neural folds. Later, expressed in the spinal cord and in the eye field. During tailbud stages, expression is still restricted to the neuroectoderm, predominantly to the hindbrain, the eye and the spinal cord. With ongoing development, expression is also found at lower levels in the branchial arches. At stage 35, expressed in the rhombencephalon and in the eye retina.

Its subcellular location is the nucleus. Functionally, transcription factor regulating the expression of cell cycle genes essential for DNA replication and mitosis. Plays a role in the control of cell proliferation. Also plays a role in DNA break repair, participating in the DNA damage checkpoint response. Promotes transcription of PHB2. This chain is Forkhead box protein M1, found in Xenopus laevis (African clawed frog).